Here is a 113-residue protein sequence, read N- to C-terminus: Translation initiation factor 1A (113 aa).

Residues 12–87 (EVIRVPLPEG…KRGDIVYRYT (76 aa)) form the S1-like domain.

Belongs to the eIF-1A family.

In terms of biological role, seems to be required for maximal rate of protein biosynthesis. Enhances ribosome dissociation into subunits and stabilizes the binding of the initiator Met-tRNA(I) to 40 S ribosomal subunits. The sequence is that of Translation initiation factor 1A (eIF1A) from Pyrococcus abyssi (strain GE5 / Orsay).